A 177-amino-acid chain; its full sequence is Large ribosomal subunit protein uL6 (177 aa).

It belongs to the universal ribosomal protein uL6 family. As to quaternary structure, part of the 50S ribosomal subunit.

Its function is as follows. This protein binds to the 23S rRNA, and is important in its secondary structure. It is located near the subunit interface in the base of the L7/L12 stalk, and near the tRNA binding site of the peptidyltransferase center. The sequence is that of Large ribosomal subunit protein uL6 from Pseudoalteromonas atlantica (strain T6c / ATCC BAA-1087).